The primary structure comprises 1226 residues: MSLPERPGGSPVYEHRNVYRNSPSRRPRPNDIETGFQSVPRAGHERGKSVSSYAETISNPHANTETLPLSPTHPTASPPPHSPDQPFTRKRSLIRPERNRIDKDHRNYHYHKHAANMETMPSSTGNDPILENVDVSTEPSGGSQTHGSFADSSPPRHHRSRKMSGDDQEKGNTRVKSRPRRSKSGKITKETRHRKSRKNPATAEQIRPPSAWNVYCAIVTFWCPDFMLKCCGKPTKAQRRAWREKMGLISIILVIMAIVGFLTFGFTATVCSAPPERLRVNKVTGGYMIFHGVAYDLSTSHHPPAEGIPLRQDGTGANVLFDLPEKHSGQDGSFLFQNVNGHCKGLINKAPGSDVPTNSDNELAWYFPCTTFNQDGSSRPNFTNPYYLGYACHTSANARNAFYVGLKGAADVYFTWDDIRNSSRNLVVYSGSVLDLNLLNWFNESEISVPDRFKVLRDQDSAVNKAIRGRDVTRMFQSPGDKQVAQCLEEITRVGFVDTETVGCIASKVVLYCALILILSVVGTRFVLALIFQWFISRKYAASKTSQSSDRRKRAKQIEDWSEDIYRAPARLPGDVGSSAMGSSDRTSKRGSSFLPTTSRFSAVYGSDRPTGARRLPTTMSSQGPASALLNPNSIYRQGNDSRASFLRPDPYSSAASPSDGPGPAGFIHDSVVPQPPSDWMPFGFPLAHTMCLVTAYSEGEEGIRTTLDSIAMTDYPNSHKAIVVICDGIIKGKGEAVSTPDVCLGMMKDHATPPDMVESFSYVAVASGSKRHNMAKVYCGFYDYGNKSRIPVEKQQRVPMMLIVKCGTPDEADKAKPGNRGKRDSQIILMSFLQKVMFDERMTELEYEMFNGLWKVTGISPDYYEIVLMVDADTKVFPDSLTHMVSAMVKDPEIMGLCGETKIANKRDSWVTAIQVFEYFISHHLAKSFESVFGGVTCLPGCFCMYRIKAPKGGQNYWVPILANPDVVEHYSENVVETLHEKNLYLLGEDRYLTTLMLRTFPKRKQVFVPQAVCKTTVPDKFMVLLSQRRRWINSTVHNLMELILVRDLCGTFCFSMQFVVFVELVGTLVLPAAIAFTFYVVITSIIHSPPQIIPLVLLALILGLPGLLILVTAHSWSYVVWMLIYLVSLPIWNFVLPTYAFWKFDDFSWGDTRKTAGDKVKKGGIEYQGEFDSSKITMKRWAEFEREKRARSAYFGSRENVVGAPGGWAVPPSHAQTDGYYSDA.

A disordered region spans residues 1 to 205 (MSLPERPGGS…SRKNPATAEQ (205 aa)). Over residues 49–65 (SVSSYAETISNPHANTE) the composition is skewed to polar residues. Residues 66-75 (TLPLSPTHPT) show a composition bias toward low complexity. The span at 94–107 (IRPERNRIDKDHRN) shows a compositional bias: basic and acidic residues. Over residues 134-151 (DVSTEPSGGSQTHGSFAD) the composition is skewed to polar residues. Basic and acidic residues predominate over residues 163-172 (MSGDDQEKGN). Residues 173–198 (TRVKSRPRRSKSGKITKETRHRKSRK) show a composition bias toward basic residues. Residues 246-266 (MGLISIILVIMAIVGFLTFGF) traverse the membrane as a helical segment. Asn-381, Asn-421, and Asn-443 each carry an N-linked (GlcNAc...) asparagine glycan. Residues 516–536 (ILILSVVGTRFVLALIFQWFI) form a helical membrane-spanning segment. Residues 572–671 (LPGDVGSSAM…PGPAGFIHDS (100 aa)) are disordered. 2 stretches are compositionally biased toward polar residues: residues 580 to 601 (AMGS…TSRF) and 618 to 643 (TTMS…NDSR). Residue Asn-640 is glycosylated (N-linked (GlcNAc...) asparagine). Residues 649–666 (PDPYSSAASPSDGPGPAG) are compositionally biased toward low complexity. N-linked (GlcNAc...) asparagine glycans are attached at residues Asn-787 and Asn-1035. 3 helical membrane passes run 1060 to 1080 (FVVF…AFTF), 1094 to 1114 (IIPL…ILVT), and 1118 to 1138 (WSYV…NFVL).

The protein belongs to the chitin synthase family. Class IV subfamily. Highly expressed in conidia.

It localises to the cell membrane. The catalysed reaction is [(1-&gt;4)-N-acetyl-beta-D-glucosaminyl](n) + UDP-N-acetyl-alpha-D-glucosamine = [(1-&gt;4)-N-acetyl-beta-D-glucosaminyl](n+1) + UDP + H(+). Polymerizes chitin, a structural polymer of the cell wall and septum, by transferring the sugar moiety of UDP-GlcNAc to the non-reducing end of the growing chitin polymer. Contributes to the production of conidia and the ability of fungal conidia to germinate. Involved in fungal stress tolerances. The polypeptide is Chitin synthase IV (Metarhizium acridum (strain CQMa 102)).